The following is a 144-amino-acid chain: NADH dehydrogenase [ubiquinone] 1 alpha subcomplex subunit 13 (144 aa).

Ala-2 is subject to N-acetylalanine. A helical transmembrane segment spans residues 30–51 (LSGYSMLAIGIGTLIYGHWSIM). Residues 102 to 144 (PDWKVGESVFHTTRWVPPLIGELYGLRTTEEALHASHGFMWYT) are important for inducing cell death.

It belongs to the complex I NDUFA13 subunit family. Complex I is composed of 45 different subunits. Interacts with CARD15, but not with CARD4. Interacts with STAT3, but not with STAT1, STAT2 and STAT5A. Interacts with OLFM4. As to quaternary structure, (Microbial infection) Interacts with HHV-8 IRF1, in the nucleus, with HPV-16 E6 and SV40 LT. Widely expressed, with highest expression in heart, skeletal muscle, liver, kidney and placenta. In intestinal mucosa, down-regulated in areas involved in Crohn disease and ulcerative colitis.

It localises to the mitochondrion inner membrane. It is found in the nucleus. In terms of biological role, accessory subunit of the mitochondrial membrane respiratory chain NADH dehydrogenase (Complex I), that is believed not to be involved in catalysis. Complex I functions in the transfer of electrons from NADH to the respiratory chain. The immediate electron acceptor for the enzyme is believed to be ubiquinone. Involved in the interferon/all-trans-retinoic acid (IFN/RA) induced cell death. This apoptotic activity is inhibited by interaction with viral IRF1. Prevents the transactivation of STAT3 target genes. May play a role in CARD15-mediated innate mucosal responses and serve to regulate intestinal epithelial cell responses to microbes. The protein is NADH dehydrogenase [ubiquinone] 1 alpha subcomplex subunit 13 (NDUFA13) of Homo sapiens (Human).